Reading from the N-terminus, the 715-residue chain is Protein DENND6 homolog (715 aa).

Positions 13-58 (MIFKEEEIKKQQILLEKEEKEKQEQQQKKLNKDNIFKLEEEGKKLE) form a coiled coil. The 178-residue stretch at 96–273 (NSFCIINFDL…VKQHQLGGGS (178 aa)) folds into the uDENN domain. Disordered regions lie at residues 269 to 296 (LGGG…SNTT) and 392 to 416 (SGTR…NNNN). The cDENN domain occupies 299-476 (SPSIWSEMKL…KDLLTRHVLD (178 aa)). Residues 399-416 (SNNNNNQDDSEYNNNNNN) show a composition bias toward low complexity. One can recognise a dDENN domain in the interval 478-600 (KEKILSEYKP…KQWLDDKRAQ (123 aa)).

The protein belongs to the DENND6 family.

In Dictyostelium discoideum (Social amoeba), this protein is Protein DENND6 homolog.